The primary structure comprises 333 residues: Nucleoid-associated protein HAPS_0704 (333 aa).

It belongs to the YejK family.

It is found in the cytoplasm. Its subcellular location is the nucleoid. This chain is Nucleoid-associated protein HAPS_0704, found in Glaesserella parasuis serovar 5 (strain SH0165) (Haemophilus parasuis).